Here is a 132-residue protein sequence, read N- to C-terminus: MTMTDPIADMLTRIRNANMVRHEKLEVPASNVKKEIAEILKREGFVRDVEYVEDNKQGIIRIFLKYGKDNERVITGLKRISKPGLRVYAKTNEVPKVLNGLGIALVSTSQGLLTDKEARAKQVGGEVLAYVW.

It belongs to the universal ribosomal protein uS8 family. In terms of assembly, part of the 30S ribosomal subunit. Contacts proteins S5 and S12.

Functionally, one of the primary rRNA binding proteins, it binds directly to 16S rRNA central domain where it helps coordinate assembly of the platform of the 30S subunit. This Lysinibacillus sphaericus (strain C3-41) protein is Small ribosomal subunit protein uS8.